Here is a 767-residue protein sequence, read N- to C-terminus: MLVTHIFLLTLSLSVPTLGQYEHWLYYPEYQASQAPEPLPTPARNVPQIHVRLAGEKRKHNEGRVEVYYEGEWGTVCDDDFSMYAAHIVCRELGYQDAVSWSPSSKYGKGEGRIWLDNVNCNGREKSIASCGSNGWGVTDCKHSEDVGVQCSDRRIPGFKVSNELPGQLEGLNIQVEEVRIRAILSAYRKRVPVTEGFVEVKVQGSWRQVCNAEWSSKNSRVVCGMFGFPAEKKFNNKVYKLFSSRRKHTYWQFSANCTGNEAHLSSCKVGGVLTPDPKTNQTCSDGSPAVVSCTPGRAFAPSPGTGFGKAFRQEQPLVRLRGGANTGEGRVEVLKNGEWGTICDDKWNLVTASVVCRELGFGSAKEALAGAQMGQGMGHIHMSEIQCNGFEKSLIDCKFNVHSQGCNHEEDAAVRCNVPAMGFENQVRLSGGRHPTEGRVEVLMERNGTLRWGTVCSDTWGTMEAMIVCRQLGLGFASHAFQETWYWQGDINADDVVMSGVKCSGTEMSLAHCRHDGANINCPRGGGRFAAGVSCVETAPDLVLNAALVEQTTYLEDRPMFMLQCAHEEQCLSSSADRTSPTTGYRRLLRFSSQIHNNGQADFRPKTGRHSWIWHDCHRHYHSMEVFTHYDLLSLNGTKVAEGHKASFCLEDSECETDVQKQYACANFGEQGITVGCWDVYRHDIDCQWVDITDVAPGDYFFQVIINPNQEVAESDYTNNIMKCRCRYDGHRIWMYNCHIGGSYSTETEEKFEHFSGLMNNQLSTR.

A signal peptide spans 1-19 (MLVTHIFLLTLSLSVPTLG). 4 SRCR domains span residues 51–152 (VRLA…VQCS), 181–295 (IRAI…VSCT), 319–418 (VRLR…VRCN), and 428–537 (VRLS…VSCV). 9 cysteine pairs are disulfide-bonded: C77-C141, C90-C151, C121-C131, C211-C284, C224-C294, C258-C268, C344-C407, C357-C417, and C388-C398. N-linked (GlcNAc...) asparagine glycosylation is present at N281. An N-linked (GlcNAc...) asparagine glycan is attached at N448. Cystine bridges form between C457–C523, C470–C536, and C504–C514. Positions 541–744 (PDLVLNAALV…WMYNCHIGGS (204 aa)) are lysyl-oxidase like. Ca(2+) is bound by residues D542 and L543. 4 disulfide bridges follow: C566/C618, C572/C688, C650/C666, and C656/C678. H619, H621, and H623 together coordinate Cu cation. An N-linked (GlcNAc...) asparagine glycan is attached at N637. A cross-link (lysine tyrosylquinone (Lys-Tyr)) is located at residues 646-682 (KASFCLEDSECETDVQKQYACANFGEQGITVGCWDVY). The residue at position 682 (Y682) is a 2',4',5'-topaquinone. Positions 715, 717, 720, and 721 each coordinate Ca(2+). An intrachain disulfide couples C725 to C739.

The protein belongs to the lysyl oxidase family. Requires Cu cation as cofactor. Lysine tyrosylquinone residue is required as a cofactor. The lysine tyrosylquinone cross-link (LTQ) is generated by condensation of the epsilon-amino group of a lysine with a topaquinone produced by oxidation of tyrosine.

The protein localises to the secreted. It is found in the extracellular space. The protein resides in the extracellular matrix. It localises to the basement membrane. Its subcellular location is the nucleus. The protein localises to the chromosome. It is found in the endoplasmic reticulum. The enzyme catalyses L-lysyl-[protein] + O2 + H2O = (S)-2-amino-6-oxohexanoyl-[protein] + H2O2 + NH4(+). In terms of biological role, mediates the post-translational oxidative deamination of lysine residues on target proteins leading to the formation of deaminated lysine (allysine). Acts as a transcription corepressor and specifically mediates deamination of trimethylated 'Lys-4' of histone H3 (H3K4me3), a specific tag for epigenetic transcriptional activation. Shows no activity against histone H3 when it is trimethylated on 'Lys-9' (H3K9me3) or 'Lys-27' (H3K27me3) or when 'Lys-4' is monomethylated (H3K4me1) or dimethylated (H3K4me2). Also mediates deamination of methylated TAF10, a member of the transcription factor IID (TFIID) complex, which induces release of TAF10 from promoters, leading to inhibition of TFIID-dependent transcription. LOXL2-mediated deamination of TAF10 results in transcriptional repression of genes required for embryonic stem cell pluripotency. Involved in epithelial to mesenchymal transition (EMT) and participates in repression of E-cadherin, probably by mediating deamination of histone H3. When secreted into the extracellular matrix, promotes cross-linking of extracellular matrix proteins by mediating oxidative deamination of peptidyl lysine residues in precursors to fibrous collagen and elastin. Acts as a regulator of sprouting angiogenesis, probably via collagen IV scaffolding. Acts as a regulator of chondrocyte differentiation, probably by regulating expression of factors that control chondrocyte differentiation. The protein is Lysyl oxidase homolog 2 (loxl2) of Xenopus tropicalis (Western clawed frog).